A 207-amino-acid polypeptide reads, in one-letter code: LexA repressor (207 aa).

The H-T-H motif DNA-binding region spans 28-48; it reads VREIGEAVGLASSSTVHGHLS. Active-site for autocatalytic cleavage activity residues include Ser130 and Lys168.

Belongs to the peptidase S24 family. As to quaternary structure, homodimer.

The catalysed reaction is Hydrolysis of Ala-|-Gly bond in repressor LexA.. Represses a number of genes involved in the response to DNA damage (SOS response), including recA and lexA. In the presence of single-stranded DNA, RecA interacts with LexA causing an autocatalytic cleavage which disrupts the DNA-binding part of LexA, leading to derepression of the SOS regulon and eventually DNA repair. The chain is LexA repressor from Staphylococcus carnosus (strain TM300).